We begin with the raw amino-acid sequence, 548 residues long: Glucose-6-phosphate isomerase 1 (548 aa).

Residue Glu353 is the Proton donor of the active site. Residues His384 and Lys512 contribute to the active site.

Belongs to the GPI family.

The protein resides in the cytoplasm. It carries out the reaction alpha-D-glucose 6-phosphate = beta-D-fructose 6-phosphate. It participates in carbohydrate biosynthesis; gluconeogenesis. The protein operates within carbohydrate degradation; glycolysis; D-glyceraldehyde 3-phosphate and glycerone phosphate from D-glucose: step 2/4. Its function is as follows. Catalyzes the reversible isomerization of glucose-6-phosphate to fructose-6-phosphate. This chain is Glucose-6-phosphate isomerase 1, found in Neisseria gonorrhoeae (strain ATCC 700825 / FA 1090).